Consider the following 454-residue polypeptide: GTPase Der (454 aa).

EngA-type G domains lie at 4 to 167 (AIVA…SEDK) and 188 to 363 (LQLA…ASWQ). GTP-binding positions include 10 to 17 (GKPNVGKS), 56 to 60 (DTPGL), 121 to 124 (NKTE), 194 to 201 (GRPNCGKS), 241 to 245 (DTAGV), and 306 to 309 (NKCD). Residues 364–450 (KRVTTGTLNQ…PVRLSFVKGK (87 aa)) form the KH-like domain.

This sequence belongs to the TRAFAC class TrmE-Era-EngA-EngB-Septin-like GTPase superfamily. EngA (Der) GTPase family. Associates with the 50S ribosomal subunit.

GTPase that plays an essential role in the late steps of ribosome biogenesis. This Orientia tsutsugamushi (strain Boryong) (Rickettsia tsutsugamushi) protein is GTPase Der.